Reading from the N-terminus, the 505-residue chain is Deoxyguanosinetriphosphate triphosphohydrolase (505 aa).

One can recognise an HD domain in the interval 66 to 273; that stretch reads RLTHSMEVQQ…MEAADDISYC (208 aa).

It belongs to the dGTPase family. Type 1 subfamily. In terms of assembly, homotetramer. Mg(2+) serves as cofactor.

It carries out the reaction dGTP + H2O = 2'-deoxyguanosine + triphosphate + H(+). In terms of biological role, dGTPase preferentially hydrolyzes dGTP over the other canonical NTPs. This is Deoxyguanosinetriphosphate triphosphohydrolase from Shigella boydii serotype 18 (strain CDC 3083-94 / BS512).